Here is a 264-residue protein sequence, read N- to C-terminus: NAD kinase 1 (264 aa).

Asp45 (proton acceptor) is an active-site residue. Residues 45–46, 122–123, Arg148, Asp150, 161–166, and Ala185 each bind NAD(+); these read DG, NE, and TAYNKS.

This sequence belongs to the NAD kinase family. A divalent metal cation serves as cofactor.

The protein localises to the cytoplasm. It catalyses the reaction NAD(+) + ATP = ADP + NADP(+) + H(+). Its function is as follows. Involved in the regulation of the intracellular balance of NAD and NADP, and is a key enzyme in the biosynthesis of NADP. Catalyzes specifically the phosphorylation on 2'-hydroxyl of the adenosine moiety of NAD to yield NADP. The sequence is that of NAD kinase 1 from Listeria monocytogenes serotype 4b (strain F2365).